A 247-amino-acid polypeptide reads, in one-letter code: Protein GrpE (247 aa).

Disordered stretches follow at residues Met-1–Asp-68 and Pro-226–Asn-247. 3 stretches are compositionally biased toward basic and acidic residues: residues Lys-7 to Gln-35, Thr-43 to Glu-54, and Glu-228 to Asn-247.

Belongs to the GrpE family. Homodimer.

The protein resides in the cytoplasm. Its function is as follows. Participates actively in the response to hyperosmotic and heat shock by preventing the aggregation of stress-denatured proteins, in association with DnaK and GrpE. It is the nucleotide exchange factor for DnaK and may function as a thermosensor. Unfolded proteins bind initially to DnaJ; upon interaction with the DnaJ-bound protein, DnaK hydrolyzes its bound ATP, resulting in the formation of a stable complex. GrpE releases ADP from DnaK; ATP binding to DnaK triggers the release of the substrate protein, thus completing the reaction cycle. Several rounds of ATP-dependent interactions between DnaJ, DnaK and GrpE are required for fully efficient folding. The sequence is that of Protein GrpE from Treponema denticola (strain ATCC 35405 / DSM 14222 / CIP 103919 / JCM 8153 / KCTC 15104).